Here is a 156-residue protein sequence, read N- to C-terminus: SCP2 sterol-binding domain-containing protein 1 (156 aa).

The SCP2 domain occupies 44–156 (NFSVFEDISQ…ERIFREWAKI (113 aa)).

The chain is SCP2 sterol-binding domain-containing protein 1 (Scp2d1) from Mus musculus (Mouse).